The sequence spans 255 residues: 4-hydroxy-tetrahydrodipicolinate reductase (255 aa).

Residues 8-13 (GATGRV), 88-90 (GTT), and 112-115 (ATNM) contribute to the NAD(+) site. H144 (proton donor/acceptor) is an active-site residue. H145 contacts (S)-2,3,4,5-tetrahydrodipicolinate. K148 (proton donor) is an active-site residue. 154–155 (GT) lines the (S)-2,3,4,5-tetrahydrodipicolinate pocket.

This sequence belongs to the DapB family.

Its subcellular location is the cytoplasm. It carries out the reaction (S)-2,3,4,5-tetrahydrodipicolinate + NAD(+) + H2O = (2S,4S)-4-hydroxy-2,3,4,5-tetrahydrodipicolinate + NADH + H(+). The catalysed reaction is (S)-2,3,4,5-tetrahydrodipicolinate + NADP(+) + H2O = (2S,4S)-4-hydroxy-2,3,4,5-tetrahydrodipicolinate + NADPH + H(+). It participates in amino-acid biosynthesis; L-lysine biosynthesis via DAP pathway; (S)-tetrahydrodipicolinate from L-aspartate: step 4/4. In terms of biological role, catalyzes the conversion of 4-hydroxy-tetrahydrodipicolinate (HTPA) to tetrahydrodipicolinate. This chain is 4-hydroxy-tetrahydrodipicolinate reductase, found in Helicobacter hepaticus (strain ATCC 51449 / 3B1).